We begin with the raw amino-acid sequence, 323 residues long: Probable pectate lyase A (323 aa).

Residues 1 to 20 (MTNFKWIVAAAGLLSGQVLA) form the signal peptide. A glycan (N-linked (GlcNAc...) asparagine) is linked at N95. Residues D136, D165, and D169 each contribute to the Ca(2+) site. Residue R222 is part of the active site.

It belongs to the polysaccharide lyase 1 family. The cofactor is Ca(2+).

Its subcellular location is the secreted. The enzyme catalyses Eliminative cleavage of (1-&gt;4)-alpha-D-galacturonan to give oligosaccharides with 4-deoxy-alpha-D-galact-4-enuronosyl groups at their non-reducing ends.. Its function is as follows. Pectinolytic enzyme consist of four classes of enzymes: pectin lyase, polygalacturonase, pectin methylesterase and rhamnogalacturonase. Among pectinolytic enzymes, pectin lyase is the most important in depolymerization of pectin, since it cleaves internal glycosidic bonds of highly methylated pectins. Favors pectate, the anion, over pectin, the methyl ester. The polypeptide is Probable pectate lyase A (plyA) (Aspergillus niger (strain ATCC MYA-4892 / CBS 513.88 / FGSC A1513)).